Here is a 361-residue protein sequence, read N- to C-terminus: MAGGRHRRVVGTLHLLLLVAALPWASRGVSPSASAWPEEKNYHQPAILNSSALRQIAEGTSISEMWQNDLQPLLIERYPGSPGSYAARQHIMQRIQRLQADWVLEIDTFLSQTPYGYRSFSNIISTLNPTAKRHLVLACHYDSKYFSHWNNRVFVGATDSAVPCAMMLELARALDKKLLSLKTVSDSKPDLSLQLIFFDGEEAFLHWSPQDSLYGSRHLAAKMASTPHPPGARGTSQLHGMDLLVLLDLIGAPNPTFPNFFPNSARWFERLQAIEHELHELGLLKDHSLEGRYFQNYSYGGVIQDDHIPFLRRGVPVLHLIPSPFPEVWHTMDDNEENLDESTIDNLNKILQVFVLEYLHL.

Residues 1–28 form the signal peptide; it reads MAGGRHRRVVGTLHLLLLVAALPWASRG. Asn49 carries N-linked (GlcNAc...) asparagine glycosylation. Cys139 and Cys164 are oxidised to a cystine. Asp159 contributes to the Zn(2+) binding site. The active-site Proton acceptor is the Glu201. Glu202 is a binding site for Zn(2+). The active-site Proton acceptor is Asp248. Asn296 carries N-linked (GlcNAc...) asparagine glycosylation. Residue His330 participates in Zn(2+) binding.

This sequence belongs to the glutaminyl-peptide cyclotransferase family.

The protein localises to the secreted. The catalysed reaction is N-terminal L-glutaminyl-[peptide] = N-terminal 5-oxo-L-prolyl-[peptide] + NH4(+). Functionally, responsible for the biosynthesis of pyroglutamyl peptides. Has a bias against acidic and tryptophan residues adjacent to the N-terminal glutaminyl residue and a lack of importance of chain length after the second residue. Also catalyzes N-terminal pyroglutamate formation. In vitro, catalyzes pyroglutamate formation of N-terminally truncated form of APP amyloid-beta peptides [Glu-3]-amyloid-beta. May be involved in the N-terminal pyroglutamate formation of several amyloid-related plaque-forming peptides. The sequence is that of Glutaminyl-peptide cyclotransferase (QPCT) from Homo sapiens (Human).